Consider the following 174-residue polypeptide: uncharacterized protein (174 aa).

Belongs to the archaeal NMN adenylyltransferase family.

This is an uncharacterized protein from Archaeoglobus fulgidus (strain ATCC 49558 / DSM 4304 / JCM 9628 / NBRC 100126 / VC-16).